The following is a 361-amino-acid chain: MSSTANNPQINSDEEENFLFAMQLASASVLPMVLKSAIELDLLELIKKAGAGAFVSPAELAAQLLTTNAEAHVMLDRILRLLTSYAILECRLKTLPDGGVQRLYGLAPVCKFLTKNEDGVSMAPLALMNQDKVLMESWYHLKDAVLDGGIPFNKAYGMTAFEYHGTDPRFNKVFNQGMSNHSTITMKKILETYTGFDGLKTVVDVGGGTGATLNMIISKYPSIKGINFDLPHVVEDAPSYPGVEHVGGDMFVSVPKGDAIFMKWICHDWSDAHCVKFLKKCYEALPENGKVILAECVLPEAPDTGLATKNVVHIDVIMLAHNPGGKERTEKEFQVLAKASGFKQFNKVCCAYNSWIMELLK.

A substrate-binding site is contributed by 128 to 134 (MNQDKVL). The tract at residues 160–178 (AFEYHGTDPRFNKVFNQGM) is substrate binding. The S-adenosyl-L-methionine site is built by glycine 206, aspartate 229, aspartate 249, methionine 250, and lysine 263. Histidine 267 (proton acceptor) is an active-site residue.

This sequence belongs to the class I-like SAM-binding methyltransferase superfamily. Cation-independent O-methyltransferase family. COMT subfamily. In terms of assembly, homodimer.

The enzyme catalyses (E)-caffeate + S-adenosyl-L-methionine = (E)-ferulate + S-adenosyl-L-homocysteine + H(+). Its pathway is aromatic compound metabolism; phenylpropanoid biosynthesis. Its function is as follows. Catalyzes the conversion of caffeic acid to ferulic acid and of 5-hydroxyferulic acid to sinapic acid. The resulting products may subsequently be converted to the corresponding alcohols that are incorporated into lignins. The protein is Caffeic acid 3-O-methyltransferase 2 (COMT2) of Ocimum basilicum (Sweet basil).